A 782-amino-acid chain; its full sequence is uncharacterized protein (782 aa).

Disordered regions lie at residues 1 to 25 (MFSPSKFRKQVNESESVSNCESTTS) and 175 to 195 (RPRTSPYKRAGDASMSREDLR). A compositionally biased stretch (low complexity) spans 13–25 (ESESVSNCESTTS). A compositionally biased stretch (basic and acidic residues) spans 183–195 (RAGDASMSREDLR). Coiled-coil stretches lie at residues 223-331 (RENR…STLN), 348-398 (LSQF…VSTL), 428-601 (NRIN…QLLN), and 699-743 (TIET…IIAK). The interval 748-782 (NIPKTEKSSPMKKVPPIENFRAKSQTSITGLSPVL) is disordered. Positions 769–782 (AKSQTSITGLSPVL) are enriched in polar residues.

This is an uncharacterized protein from Caenorhabditis elegans.